A 161-amino-acid polypeptide reads, in one-letter code: Phosphopantetheine adenylyltransferase (161 aa).

Ser-9 contacts substrate. Residues 9 to 10 and His-17 contribute to the ATP site; that span reads SF. Positions 41, 73, and 87 each coordinate substrate. ATP contacts are provided by residues 88 to 90, Glu-98, and 123 to 129; these read GLR and FAHISST.

The protein belongs to the bacterial CoaD family. Homohexamer. The cofactor is Mg(2+).

Its subcellular location is the cytoplasm. It carries out the reaction (R)-4'-phosphopantetheine + ATP + H(+) = 3'-dephospho-CoA + diphosphate. It participates in cofactor biosynthesis; coenzyme A biosynthesis; CoA from (R)-pantothenate: step 4/5. Functionally, reversibly transfers an adenylyl group from ATP to 4'-phosphopantetheine, yielding dephospho-CoA (dPCoA) and pyrophosphate. The chain is Phosphopantetheine adenylyltransferase from Chloroflexus aggregans (strain MD-66 / DSM 9485).